The sequence spans 332 residues: MKIIAYAVRDDERPFFDTWMKENPDVEVKLVPELLTEDNVDLAKGFDGADVYQQKDYTAEVLNKLADEGVKNISLRNVGVDNLDVPTVKARGLNISNVPAYSPNAIAELSVTQLMQLLRQTPLFNKKLAKQDFRWAPDIAKELNTMTVGVIGTGRIGRAAIDIFKGFGAKVIGYDVYRNAELEKEGMYVDTLDELYAQADVITLHVPALKDNYHMLNADAFSKMKDGAYILNFARGTLIDSEDLIKALDSGKVAGAALDTYEYETKIFNKDLEGQTIDDKVFMNLFNRDNVLITPHTAFYTETAVHNMVHVSMNSNKQFIETGKADTQVKFD.

NAD(+) contacts are provided by residues 155-156 (RI), aspartate 175, 206-207 (VP), asparagine 212, 233-235 (FAR), and aspartate 259. Residue arginine 235 is part of the active site. The active site involves glutamate 264. The active-site Proton donor is histidine 296.

This sequence belongs to the D-isomer specific 2-hydroxyacid dehydrogenase family.

The enzyme catalyses (R)-lactate + NAD(+) = pyruvate + NADH + H(+). The protein is D-lactate dehydrogenase (ldhD) of Lactiplantibacillus plantarum (strain ATCC BAA-793 / NCIMB 8826 / WCFS1) (Lactobacillus plantarum).